A 271-amino-acid polypeptide reads, in one-letter code: Phosphate import ATP-binding protein PstB (271 aa).

The 254-residue stretch at valine 13–isoleucine 266 folds into the ABC transporter domain. Residue glycine 57–serine 64 coordinates ATP.

The protein belongs to the ABC transporter superfamily. Phosphate importer (TC 3.A.1.7) family. The complex is composed of two ATP-binding proteins (PstB), two transmembrane proteins (PstC and PstA) and a solute-binding protein (PstS).

The protein localises to the cell inner membrane. The enzyme catalyses phosphate(out) + ATP + H2O = ADP + 2 phosphate(in) + H(+). Functionally, part of the ABC transporter complex PstSACB involved in phosphate import. Responsible for energy coupling to the transport system. In Thermus thermophilus (strain ATCC 27634 / DSM 579 / HB8), this protein is Phosphate import ATP-binding protein PstB.